The following is a 271-amino-acid chain: ATP synthase subunit a (271 aa).

5 helical membrane passes run Thr40–Phe60, Leu100–Leu120, Asp146–Ile166, Leu220–Pro240, and Ala242–Val262.

It belongs to the ATPase A chain family. F-type ATPases have 2 components, CF(1) - the catalytic core - and CF(0) - the membrane proton channel. CF(1) has five subunits: alpha(3), beta(3), gamma(1), delta(1), epsilon(1). CF(0) has three main subunits: a(1), b(2) and c(9-12). The alpha and beta chains form an alternating ring which encloses part of the gamma chain. CF(1) is attached to CF(0) by a central stalk formed by the gamma and epsilon chains, while a peripheral stalk is formed by the delta and b chains.

Its subcellular location is the cell inner membrane. Key component of the proton channel; it plays a direct role in the translocation of protons across the membrane. The polypeptide is ATP synthase subunit a (Escherichia coli O1:K1 / APEC).